The chain runs to 1114 residues: Hephaestin-like protein (1114 aa).

Residues 1 to 26 (MMDRSNAAFVLTACFIFSQLICHVAA) form the signal peptide. 6 Plastocyanin-like domains span residues 27–210 (ITRT…LICR), 218–365 (QQSG…VTKC), 380–562 (KRTY…LLTC), 572–719 (TRKD…VNTC), 730–915 (KTRD…LIIC), and 924–1114 (TEER…LLKA). Residues 27 to 1091 (ITRTYYIAAV…KTTPKPITAA (1065 aa)) are Extracellular-facing. The N-linked (GlcNAc...) asparagine glycan is linked to N121. Positions 129, 131, 189, and 191 each coordinate Cu cation. The cysteines at positions 183 and 209 are disulfide-linked. N-linked (GlcNAc...) asparagine glycosylation is present at N236. Residues C284 and C365 are joined by a disulfide bond. Residues H303, C346, and H351 each coordinate Cu cation. N-linked (GlcNAc...) asparagine glycans are attached at residues N361, N478, and N489. 2 disulfides stabilise this stretch: C536–C562 and C638–C719. Cu cation-binding residues include H657, C700, H705, and M710. An N-linked (GlcNAc...) asparagine glycan is attached at N831. C889 and C915 form a disulfide bridge. A glycan (N-linked (GlcNAc...) asparagine) is linked at N944. Positions 1014, 1017, 1019, 1059, 1060, 1061, 1065, and 1070 each coordinate Cu cation. The chain crosses the membrane as a helical span at residues 1092-1112 (SSFVTSSIFIYLSFPVLAMLL). Residues 1113-1114 (KA) lie on the Cytoplasmic side of the membrane.

It belongs to the multicopper oxidase family. The cofactor is Cu cation. As to expression, component of the acid-insoluble and acid-soluble organic matrix of the aragonitic skeleton (at protein level).

The protein localises to the membrane. In terms of biological role, may function as a ferroxidase and may be involved in copper transport and homeostasis. The sequence is that of Hephaestin-like protein from Acropora millepora (Staghorn coral).